We begin with the raw amino-acid sequence, 90 residues long: RNA-binding protein Hfq (90 aa).

The Sm domain occupies 9–68; it reads DPFLNALRRERVPVSIYLVNGIKLQGQVESFDQFVILLKNTVSQMVYKHAISTVVPARPF. A disordered region spans residues 71 to 90; sequence TGHQNAQGGYGPQDDVPSGE.

It belongs to the Hfq family. Homohexamer.

In terms of biological role, RNA chaperone that binds small regulatory RNA (sRNAs) and mRNAs to facilitate mRNA translational regulation in response to envelope stress, environmental stress and changes in metabolite concentrations. Also binds with high specificity to tRNAs. The polypeptide is RNA-binding protein Hfq (Shewanella putrefaciens (strain CN-32 / ATCC BAA-453)).